Reading from the N-terminus, the 315-residue chain is MMASLRHSITSALRSSRQGCSKSAQWQSLDQQFGALRISSRSLSTHAHDHNPNVDGQFIAAPALSIDNFKLHPYARAVPVSPSYFTRTPRFYDNYLSLEKLMEEYEDLPVIPATAVERVAWKTLEDIRKELGEQVKASEFARCLALVKRLNSIHPDLKPQEIKDVLDSFRRNVQPFTNVAKPIPIDQFGRACGVGKRKASSARAFVVEGTGEVLVNGKTLAEYFGRVHDRESAVWALRATNRIDKYNVWVKVEGGGTTGQAEAITLAIAKALLAHEPALKPALRRAGCVTRDPRKVERKKHGHVKARKMPTWVKR.

The N-terminal 42 residues, Met1–Ser42, are a transit peptide targeting the mitochondrion. Residues Pro293 to Arg315 are disordered. The segment covering Val296 to Arg315 has biased composition (basic residues).

This sequence belongs to the universal ribosomal protein uS9 family. As to quaternary structure, component of the mitochondrial small ribosomal subunit (mt-SSU). Mature N.crassa 74S mitochondrial ribosomes consist of a small (37S) and a large (54S) subunit. The 37S small subunit contains a 16S ribosomal RNA (16S mt-rRNA) and 32 different proteins. The 54S large subunit contains a 23S rRNA (23S mt-rRNA) and 42 different proteins.

It localises to the mitochondrion. Its function is as follows. Component of the mitochondrial ribosome (mitoribosome), a dedicated translation machinery responsible for the synthesis of mitochondrial genome-encoded proteins, including at least some of the essential transmembrane subunits of the mitochondrial respiratory chain. The mitoribosomes are attached to the mitochondrial inner membrane and translation products are cotranslationally integrated into the membrane. This is Small ribosomal subunit protein uS9m (mrp-9) from Neurospora crassa (strain ATCC 24698 / 74-OR23-1A / CBS 708.71 / DSM 1257 / FGSC 987).